A 99-amino-acid polypeptide reads, in one-letter code: Cystatin (99 aa).

One can recognise a Cystatin domain in the interval 3–99; the sequence is GGLSPRSVSD…EEKLCGFQVW (97 aa). The Secondary area of contact motif lies at 47–51; it reads QSVAG. Residues Cys65 and Cys81 are joined by a disulfide bond.

The protein belongs to the cystatin family. Expressed by the venom gland.

Its subcellular location is the secreted. Its function is as follows. Inhibits various C1 cysteine proteases including cathepsin L (Ki is 0.1 nM), papain (Ki is 0.19 nM), cathepsin S (Ki is 1.2 nM), and cathepsin B (Ki is 2.5 nM). This protein has no toxic activity and its function in the venom is unknown. It may play a role as housekeeping or regulatory protein. This Naja atra (Chinese cobra) protein is Cystatin.